The sequence spans 303 residues: tRNA pseudouridine synthase B (303 aa).

D47 acts as the Nucleophile in catalysis.

It belongs to the pseudouridine synthase TruB family. Type 1 subfamily.

It catalyses the reaction uridine(55) in tRNA = pseudouridine(55) in tRNA. Its function is as follows. Responsible for synthesis of pseudouridine from uracil-55 in the psi GC loop of transfer RNAs. The polypeptide is tRNA pseudouridine synthase B (Legionella pneumophila (strain Paris)).